Reading from the N-terminus, the 244-residue chain is Protein DMP9 (244 aa).

Residues 1–56 (MEKTEESVGIRVYTATPPQKPSPSPPSRSPKPVLISSLPSLPSGAAAGGGRGRKRR) are disordered. Positions 18-29 (PQKPSPSPPSRS) are enriched in pro residues. Residues 30–45 (PKPVLISSLPSLPSGA) show a composition bias toward low complexity. A run of 4 helical transmembrane segments spans residues 71–91 (MLVNFLPTGTLLMFEMVLPSI), 99–119 (GINTLMIHLLLLLCAMSCFFF), 173–193 (LTVNDFVHAVMSVLVFMAIAF), and 213–233 (VMESFPIMVGIVCSALFLVFP).

The protein belongs to the plant DMP1 protein family. Restricted to flowers and pollen.

It localises to the endoplasmic reticulum membrane. It is found in the vacuole membrane. Its function is as follows. Involved in membrane remodeling. This Arabidopsis thaliana (Mouse-ear cress) protein is Protein DMP9.